A 216-amino-acid chain; its full sequence is Small ribosomal subunit protein uS3c (216 aa).

The 76-residue stretch at 43–118 (IKNYLQKNMR…KLNIAITRIT (76 aa)) folds into the KH type-2 domain.

It belongs to the universal ribosomal protein uS3 family. In terms of assembly, part of the 30S ribosomal subunit.

The protein localises to the plastid. The protein resides in the chloroplast. This Eucalyptus globulus subsp. globulus (Tasmanian blue gum) protein is Small ribosomal subunit protein uS3c (rps3).